The chain runs to 314 residues: Serine protease 46 (314 aa).

The Peptidase S1 domain maps to Val-44–Gly-281. A disulfide bridge links Cys-69 with Cys-85. Residues His-84 and Asp-130 each act as charge relay system in the active site. 3 cysteine pairs are disulfide-bonded: Cys-164-Cys-239, Cys-197-Cys-219, and Cys-229-Cys-257. The active-site Charge relay system is the Ser-233. A helical transmembrane segment spans residues Phe-293–Leu-313.

Belongs to the peptidase S1 family.

Its subcellular location is the membrane. This is Serine protease 46 (Prss46) from Mus musculus (Mouse).